The sequence spans 508 residues: RanBP-type and C3HC4-type zinc finger-containing protein 1 (508 aa).

Residue methionine 1 is modified to N-acetylmethionine. The tract at residues 1-218 (MDEKTKKAEE…PGCEMCCRAR (218 aa)) is interaction with IRF3. Residues 1–268 (MDEKTKKAEE…NYLQHVQLEQ (268 aa)) form an interaction with TAB2 region. Serine 50 carries the phosphoserine modification. Residues 55–119 (IRLCVSVEDA…DQETLHSHGI (65 aa)) enclose the Ubiquitin-like domain. The interaction with RNF31 stretch occupies residues 69-131 (VTIWLTVRPD…NGDGAYLYLL (63 aa)). The disordered stretch occupies residues 163-191 (QSRGPLEPVLPKPRTNQEPGQPDAAPESP). A RanBP2-type zinc finger spans residues 188–220 (PESPPVGWQCPGCTFINKPTRPGCEMCCRARPE). Positions 231–259 (DEEERARLAGEEEALRQYQQRKQQQQEGN) form a coiled coil. The tract at residues 276–504 (EPTECPVCYS…VNGIPCHPSC (229 aa)) is TRIAD supradomain. Zn(2+)-binding residues include cysteine 280, cysteine 283, cysteine 298, histidine 300, cysteine 303, cysteine 306, and cysteine 321. The segment at 280 to 330 (CPVCYSVLAPGEAVVLRECLHTFCRECLQGTIRNSQEAEVACPFIDSTYSC) adopts an RING-type 1 zinc-finger fold. At tyrosine 328 the chain carries Phosphotyrosine. 11 residues coordinate Zn(2+): cysteine 330, cysteine 369, cysteine 374, cysteine 389, cysteine 392, cysteine 397, cysteine 400, histidine 404, cysteine 409, cysteine 445, and cysteine 448. The segment at 349–409 (QRFLDLGVSI…CKAIHEHMNC (61 aa)) adopts an IBR-type zinc-finger fold. The segment at 445-474 (CPQCRIVVQKKDGCDWIRCTVCHTEICWVT) adopts an RING-type 2; atypical zinc-finger fold. Cysteine 458 is a catalytic residue. Zn(2+) is bound by residues cysteine 463 and cysteine 466.

Belongs to the RBR family. In terms of assembly, component of the LUBAC complex (linear ubiquitin chain assembly complex) which consists of SHARPIN, RBCK1 and RNF31. LUBAC has a MW of approximately 600 kDa suggesting a heteromultimeric assembly of its subunits. Interacts with beta-I-type (PRKCB1) and zeta-type protein kinase C (PRKCZ). Interacts with UBE2L3. Interacts with IREB2 only in iron-rich conditions. Associates with the TNF-R1 signaling complex (TNF-RSC) in a stimulation-dependent manner. Interacts with EYA1, TAB2, TAB3, MAP3K7 TRAF6 and RIPK1. Interacts with IRF3. In terms of processing, auto-ubiquitinated. Auto-ubiquitination leads to degradation by the proteasome. Post-translationally, phosphorylated. In vitro, phosphorylation inhibits auto-ubiquitination activity.

It carries out the reaction [E2 ubiquitin-conjugating enzyme]-S-ubiquitinyl-L-cysteine + [acceptor protein]-L-lysine = [E2 ubiquitin-conjugating enzyme]-L-cysteine + [acceptor protein]-N(6)-ubiquitinyl-L-lysine.. It participates in protein modification; protein ubiquitination. Its function is as follows. E3 ubiquitin-protein ligase, which accepts ubiquitin from specific E2 ubiquitin-conjugating enzymes, such as UBE2L3/UBCM4, and then transfers it to substrates. Functions as an E3 ligase for oxidized IREB2 and both heme and oxygen are necessary for IREB2 ubiquitination. Promotes ubiquitination of TAB2 and IRF3 and their degradation by the proteasome. Component of the LUBAC complex which conjugates linear ('Met-1'-linked) polyubiquitin chains to substrates and plays a key role in NF-kappa-B activation and regulation of inflammation. LUBAC conjugates linear polyubiquitin to IKBKG and RIPK1 and is involved in activation of the canonical NF-kappa-B and the JNK signaling pathways. Linear ubiquitination mediated by the LUBAC complex interferes with TNF-induced cell death and thereby prevents inflammation. LUBAC is recruited to the TNF-R1 signaling complex (TNF-RSC) following polyubiquitination of TNF-RSC components by BIRC2 and/or BIRC3 and to conjugate linear polyubiquitin to IKBKG and possibly other components contributing to the stability of the complex. The LUBAC complex is also involved in innate immunity by conjugating linear polyubiquitin chains at the surface of bacteria invading the cytosol to form the ubiquitin coat surrounding bacteria. LUBAC is not able to initiate formation of the bacterial ubiquitin coat, and can only promote formation of linear polyubiquitins on pre-existing ubiquitin. The bacterial ubiquitin coat acts as an 'eat-me' signal for xenophagy and promotes NF-kappa-B activation. Together with OTULIN, the LUBAC complex regulates the canonical Wnt signaling during angiogenesis. Binds polyubiquitin of different linkage types. The chain is RanBP-type and C3HC4-type zinc finger-containing protein 1 (Rbck1) from Mus musculus (Mouse).